We begin with the raw amino-acid sequence, 138 residues long: Large ribosomal subunit protein uL16m (138 aa).

The protein belongs to the universal ribosomal protein uL16 family.

It is found in the mitochondrion. This chain is Large ribosomal subunit protein uL16m (RPL16), found in Chondrus crispus (Carrageen Irish moss).